A 289-amino-acid chain; its full sequence is MSNISAKLVKELRERTGAGMMECKKALVAAAGDIEKAAEEMRISGQAKADKKASRVAAEGVIEVYAADGRAILLEINSETDFVARDETFKKFAQEAVKAAHAANAKTIEEVLAAKTSNGETVEEVRKSLIAKIGENIQVRRVKTVEAETLGAYIHGSKIGVVAALEGGDEDLAKDVAMHVAAANPMVVSGDQVPADVVAKEKEIFTAQAKESGKPAEIIEKMIVGRIRKFLDEVALLGQDFVKDPAIKVEKLVKDKGAKVVNFIRLDVGEGIEKKEEDFAAEVMSQIKG.

Residues 80–83 (TDFV) are involved in Mg(2+) ion dislocation from EF-Tu.

The protein belongs to the EF-Ts family.

It is found in the cytoplasm. In terms of biological role, associates with the EF-Tu.GDP complex and induces the exchange of GDP to GTP. It remains bound to the aminoacyl-tRNA.EF-Tu.GTP complex up to the GTP hydrolysis stage on the ribosome. The chain is Elongation factor Ts from Francisella tularensis subsp. tularensis (strain FSC 198).